Consider the following 173-residue polypeptide: Crossover junction endodeoxyribonuclease RuvC (173 aa).

Residues Asp8, Glu69, and Asp141 contribute to the active site. Asp8, Glu69, and Asp141 together coordinate Mg(2+).

It belongs to the RuvC family. In terms of assembly, homodimer which binds Holliday junction (HJ) DNA. The HJ becomes 2-fold symmetrical on binding to RuvC with unstacked arms; it has a different conformation from HJ DNA in complex with RuvA. In the full resolvosome a probable DNA-RuvA(4)-RuvB(12)-RuvC(2) complex forms which resolves the HJ. Requires Mg(2+) as cofactor.

It localises to the cytoplasm. The catalysed reaction is Endonucleolytic cleavage at a junction such as a reciprocal single-stranded crossover between two homologous DNA duplexes (Holliday junction).. The RuvA-RuvB-RuvC complex processes Holliday junction (HJ) DNA during genetic recombination and DNA repair. Endonuclease that resolves HJ intermediates. Cleaves cruciform DNA by making single-stranded nicks across the HJ at symmetrical positions within the homologous arms, yielding a 5'-phosphate and a 3'-hydroxyl group; requires a central core of homology in the junction. The consensus cleavage sequence is 5'-(A/T)TT(C/G)-3'. Cleavage occurs on the 3'-side of the TT dinucleotide at the point of strand exchange. HJ branch migration catalyzed by RuvA-RuvB allows RuvC to scan DNA until it finds its consensus sequence, where it cleaves and resolves the cruciform DNA. The sequence is that of Crossover junction endodeoxyribonuclease RuvC from Xylella fastidiosa (strain 9a5c).